The chain runs to 346 residues: Probable dual-specificity RNA methyltransferase RlmN (346 aa).

The Proton acceptor role is filled by Glu-76. A Radical SAM core domain is found at 97 to 329; sequence SYDRATICVS…TFIRKPRGRD (233 aa). Cysteines 104 and 334 form a disulfide. [4Fe-4S] cluster is bound by residues Cys-111, Cys-115, and Cys-118. Residues 162–163, Ser-192, 215–217, and Asn-291 each bind S-adenosyl-L-methionine; these read GE and SLN. Cys-334 serves as the catalytic S-methylcysteine intermediate.

It belongs to the radical SAM superfamily. RlmN family. It depends on [4Fe-4S] cluster as a cofactor.

It is found in the cytoplasm. It carries out the reaction adenosine(2503) in 23S rRNA + 2 reduced [2Fe-2S]-[ferredoxin] + 2 S-adenosyl-L-methionine = 2-methyladenosine(2503) in 23S rRNA + 5'-deoxyadenosine + L-methionine + 2 oxidized [2Fe-2S]-[ferredoxin] + S-adenosyl-L-homocysteine. The catalysed reaction is adenosine(37) in tRNA + 2 reduced [2Fe-2S]-[ferredoxin] + 2 S-adenosyl-L-methionine = 2-methyladenosine(37) in tRNA + 5'-deoxyadenosine + L-methionine + 2 oxidized [2Fe-2S]-[ferredoxin] + S-adenosyl-L-homocysteine. In terms of biological role, specifically methylates position 2 of adenine 2503 in 23S rRNA and position 2 of adenine 37 in tRNAs. This chain is Probable dual-specificity RNA methyltransferase RlmN, found in Koribacter versatilis (strain Ellin345).